An 88-amino-acid polypeptide reads, in one-letter code: Small ribosomal subunit protein bS20 (88 aa).

The disordered stretch occupies residues 1-27 (MANSKSAKKRALQSEKRRQHNASRRSM).

Belongs to the bacterial ribosomal protein bS20 family.

In terms of biological role, binds directly to 16S ribosomal RNA. This is Small ribosomal subunit protein bS20 from Shewanella frigidimarina (strain NCIMB 400).